The sequence spans 333 residues: uncharacterized protein (333 aa).

A signal peptide spans 1–16 (MRPFLMILSVTYIASA). An N-linked (GlcNAc...) asparagine glycan is attached at Asn204.

This is an uncharacterized protein from Encephalitozoon cuniculi (strain GB-M1) (Microsporidian parasite).